The following is a 158-amino-acid chain: Transcriptional regulator MraZ (158 aa).

SpoVT-AbrB domains follow at residues 7 to 54 and 84 to 127; these read NIEA…PEEV and VEII…AKER.

Belongs to the MraZ family. In terms of assembly, forms oligomers.

Its subcellular location is the cytoplasm. It is found in the nucleoid. The sequence is that of Transcriptional regulator MraZ from Bacteroides fragilis (strain ATCC 25285 / DSM 2151 / CCUG 4856 / JCM 11019 / LMG 10263 / NCTC 9343 / Onslow / VPI 2553 / EN-2).